A 236-amino-acid polypeptide reads, in one-letter code: MNLLGFLAVVALSTASVQAGTIDHNQVVPFAQPEATTISQKAAIKFKPQIHITNGCHPYPAVNEAGETSGGLKTSGAPSSSCKGSGWGSQVYGRSTWYNGKWAIMYSWYFPKDSPSTGLGHRHDWEHVVVWIDNPDVANPTILAASPSAHSGYSFYAPPSSDSVGGTSVKVNYESNWPINHALDMTSKSGETQDLIMWDQLTDEARAGLNSADFGDTFAPFTDDNFKTALGKAWPF.

Residues 1-19 form the signal peptide; the sequence is MNLLGFLAVVALSTASVQA. The short motif at 103 to 113 is the Conserved undecapeptide motif I element; it reads AIMYSWYFPKD. The short motif at 120–126 is the Hepta-peptide GHRHDWE motif II element; that stretch reads GHRHDWE.

The protein belongs to the Necrosis inducing protein (NPP1) family.

The protein resides in the secreted. Secreted effector that contributes to virulence during infection by P.capsici. Induces distinct chlorosis at 3 days after inoculation of host C.annuum leaves, and all the chlorotic areas gradually turn brown and become moderately necrotic at 7 days after inoculation. Leads only to chlorotic areas, without necrosis at 7 days after non-host N.benthamiana leaves infection. Induces cell death in hot pepper. This Phytophthora capsici protein is NLP effector protein 3.